The primary structure comprises 297 residues: Probable GTP 3',8-cyclase (297 aa).

Residues arginine 4–aspartate 227 enclose the Radical SAM core domain. Arginine 13 is a binding site for GTP. [4Fe-4S] cluster contacts are provided by cysteine 20 and cysteine 24. Residue tyrosine 26 coordinates S-adenosyl-L-methionine. Residue cysteine 27 coordinates [4Fe-4S] cluster. Lysine 61 serves as a coordination point for GTP. Residue glycine 65 participates in S-adenosyl-L-methionine binding. Threonine 91 provides a ligand contact to GTP. Residue serine 115 coordinates S-adenosyl-L-methionine. Lysine 152 provides a ligand contact to GTP. [4Fe-4S] cluster contacts are provided by cysteine 243 and cysteine 246. Residue arginine 248–arginine 250 coordinates GTP. Cysteine 260 is a binding site for [4Fe-4S] cluster.

It belongs to the radical SAM superfamily. MoaA family. The cofactor is [4Fe-4S] cluster.

It carries out the reaction GTP + AH2 + S-adenosyl-L-methionine = (8S)-3',8-cyclo-7,8-dihydroguanosine 5'-triphosphate + 5'-deoxyadenosine + L-methionine + A + H(+). Its pathway is cofactor biosynthesis; molybdopterin biosynthesis. Its function is as follows. Catalyzes the cyclization of GTP to (8S)-3',8-cyclo-7,8-dihydroguanosine 5'-triphosphate. In Methanococcus maripaludis (strain DSM 14266 / JCM 13030 / NBRC 101832 / S2 / LL), this protein is Probable GTP 3',8-cyclase.